We begin with the raw amino-acid sequence, 222 residues long: Phosphoenolpyruvate guanylyltransferase (222 aa).

3 residues coordinate phosphoenolpyruvate: Thr-134, Gly-150, and Ser-153.

It belongs to the CofC family.

It carries out the reaction phosphoenolpyruvate + GTP + H(+) = enolpyruvoyl-2-diphospho-5'-guanosine + diphosphate. Its pathway is cofactor biosynthesis; coenzyme F420 biosynthesis. Its function is as follows. Guanylyltransferase that catalyzes the activation of phosphoenolpyruvate (PEP) as enolpyruvoyl-2-diphospho-5'-guanosine, via the condensation of PEP with GTP. It is involved in the biosynthesis of coenzyme F420, a hydride carrier cofactor. The sequence is that of Phosphoenolpyruvate guanylyltransferase from Roseiflexus sp. (strain RS-1).